A 106-amino-acid polypeptide reads, in one-letter code: uncharacterized protein (106 aa).

It localises to the mitochondrion. This is an uncharacterized protein from Arabidopsis thaliana (Mouse-ear cress).